A 311-amino-acid polypeptide reads, in one-letter code: Lipid A biosynthesis acyltransferase (311 aa).

Residues 19-39 (WLFWLGVAIWRSILCLPYPIL) form a helical membrane-spanning segment. Positions 134–139 (HFLTLE) match the HXXXXD motif motif.

Belongs to the LpxL/LpxM/LpxP family.

It localises to the cell inner membrane. It catalyses the reaction an alpha-Kdo-(2-&gt;4)-alpha-Kdo-(2-&gt;6)-lipid IVA + a fatty acyl-[ACP] = an alpha-Kdo-(2-&gt;4)-alpha-Kdo-(2-&gt;6)-(acyl)-lipid IVA + holo-[ACP]. It functions in the pathway glycolipid biosynthesis; KDO(2)-lipid A biosynthesis; KDO(2)-lipid A from CMP-3-deoxy-D-manno-octulosonate and lipid IV(A): step 3/4. The protein operates within bacterial outer membrane biogenesis; lipopolysaccharide biosynthesis. In terms of biological role, catalyzes the transfer of an acyl chain from an acyl-[acyl-carrier-protein] (ACP) to a Kdo(2)-lipid IV(A) to form a Kdo(2)-(acyl)-lipid IV(A). This chain is Lipid A biosynthesis acyltransferase, found in Haemophilus influenzae (strain ATCC 51907 / DSM 11121 / KW20 / Rd).